Consider the following 462-residue polypeptide: Peroxisomal membrane protein PEX31 (462 aa).

Residues 1–19 (MSEINNENLEPTSSTVAES) show a composition bias toward polar residues. The interval 1–26 (MSEINNENLEPTSSTVAESTESKNKH) is disordered. Topologically, residues 1–90 (MSEINNENLE…LSIITWSNDN (90 aa)) are cytoplasmic. Residues 91–111 (VSANLLGIFLFTVCVLYFGFI) traverse the membrane as a helical segment. The Peroxisomal segment spans residues 112–175 (TRYFGHLMIV…TILSAQDVRR (64 aa)). Residues 176-196 (LLFTIAFLSPVYIFLTVFVLS) traverse the membrane as a helical segment. Over 197-462 (PNYLMLIGGL…ISDVSMSPSL (266 aa)) the chain is Cytoplasmic. Positions 406–425 (PTVEKATPNSHALKSEENNR) are disordered. A Phosphoserine modification is found at serine 432. At threonine 435 the chain carries Phosphothreonine.

It belongs to the PEX28-32 family. PEX30/31 subfamily.

The protein localises to the peroxisome membrane. This Saccharomyces cerevisiae (strain ATCC 204508 / S288c) (Baker's yeast) protein is Peroxisomal membrane protein PEX31 (PEX31).